A 585-amino-acid chain; its full sequence is Formate--tetrahydrofolate ligase (585 aa).

Thr65–Thr72 provides a ligand contact to ATP.

The protein belongs to the formate--tetrahydrofolate ligase family.

It catalyses the reaction (6S)-5,6,7,8-tetrahydrofolate + formate + ATP = (6R)-10-formyltetrahydrofolate + ADP + phosphate. It participates in one-carbon metabolism; tetrahydrofolate interconversion. The sequence is that of Formate--tetrahydrofolate ligase from Shewanella baltica (strain OS195).